The sequence spans 95 residues: MSLDKATVAKIAHLARIRVPEEEQEHLAQELNGILGWVEQLGEVDTDGVQPITSNVAQTLRRRQDVVTDGGYPEKVVANAPEGAEHFFAVPKVVE.

It belongs to the GatC family. In terms of assembly, heterotrimer of A, B and C subunits.

It catalyses the reaction L-glutamyl-tRNA(Gln) + L-glutamine + ATP + H2O = L-glutaminyl-tRNA(Gln) + L-glutamate + ADP + phosphate + H(+). It carries out the reaction L-aspartyl-tRNA(Asn) + L-glutamine + ATP + H2O = L-asparaginyl-tRNA(Asn) + L-glutamate + ADP + phosphate + 2 H(+). Functionally, allows the formation of correctly charged Asn-tRNA(Asn) or Gln-tRNA(Gln) through the transamidation of misacylated Asp-tRNA(Asn) or Glu-tRNA(Gln) in organisms which lack either or both of asparaginyl-tRNA or glutaminyl-tRNA synthetases. The reaction takes place in the presence of glutamine and ATP through an activated phospho-Asp-tRNA(Asn) or phospho-Glu-tRNA(Gln). The chain is Aspartyl/glutamyl-tRNA(Asn/Gln) amidotransferase subunit C from Rhodospirillum centenum (strain ATCC 51521 / SW).